The following is a 359-amino-acid chain: 3-dehydroquinate synthase (359 aa).

Residues 71–76 (DGEAYK), 105–109 (GVIGD), 129–130 (TT), K142, and K151 contribute to the NAD(+) site. Zn(2+) is bound by residues E184, H247, and H264.

Belongs to the sugar phosphate cyclases superfamily. Dehydroquinate synthase family. Co(2+) is required as a cofactor. It depends on Zn(2+) as a cofactor. Requires NAD(+) as cofactor.

It is found in the cytoplasm. It catalyses the reaction 7-phospho-2-dehydro-3-deoxy-D-arabino-heptonate = 3-dehydroquinate + phosphate. It participates in metabolic intermediate biosynthesis; chorismate biosynthesis; chorismate from D-erythrose 4-phosphate and phosphoenolpyruvate: step 2/7. In terms of biological role, catalyzes the conversion of 3-deoxy-D-arabino-heptulosonate 7-phosphate (DAHP) to dehydroquinate (DHQ). The chain is 3-dehydroquinate synthase from Burkholderia vietnamiensis (strain G4 / LMG 22486) (Burkholderia cepacia (strain R1808)).